The following is a 207-amino-acid chain: Outer-membrane lipoprotein LolB (207 aa).

Residues 1 to 21 form the signal peptide; sequence MPLPDFRLIRLLPLAALVLTA. Cysteine 22 carries the N-palmitoyl cysteine lipid modification. Residue cysteine 22 is the site of S-diacylglycerol cysteine attachment.

Belongs to the LolB family. Monomer.

It localises to the cell outer membrane. Plays a critical role in the incorporation of lipoproteins in the outer membrane after they are released by the LolA protein. The protein is Outer-membrane lipoprotein LolB of Escherichia coli O127:H6 (strain E2348/69 / EPEC).